The primary structure comprises 511 residues: ATP synthase subunit alpha (511 aa).

Position 169–176 (169–176 (GDRQTGKT)) interacts with ATP.

The protein belongs to the ATPase alpha/beta chains family. As to quaternary structure, F-type ATPases have 2 components, CF(1) - the catalytic core - and CF(0) - the membrane proton channel. CF(1) has five subunits: alpha(3), beta(3), gamma(1), delta(1), epsilon(1). CF(0) has three main subunits: a(1), b(2) and c(9-12). The alpha and beta chains form an alternating ring which encloses part of the gamma chain. CF(1) is attached to CF(0) by a central stalk formed by the gamma and epsilon chains, while a peripheral stalk is formed by the delta and b chains.

Its subcellular location is the cell inner membrane. It catalyses the reaction ATP + H2O + 4 H(+)(in) = ADP + phosphate + 5 H(+)(out). Its function is as follows. Produces ATP from ADP in the presence of a proton gradient across the membrane. The alpha chain is a regulatory subunit. The protein is ATP synthase subunit alpha of Janthinobacterium sp. (strain Marseille) (Minibacterium massiliensis).